The primary structure comprises 215 residues: Probable phosphoglycerate mutase GpmB (215 aa).

Substrate contacts are provided by residues 8-15, 21-22, arginine 58, lysine 60, 82-85, 104-105, and 151-152; these read RHGETQWN, QG, ELDM, RR, and GI. Histidine 9 (tele-phosphohistidine intermediate) is an active-site residue. Residue glutamate 82 is the Proton donor/acceptor of the active site.

This sequence belongs to the phosphoglycerate mutase family. GpmB subfamily.

The catalysed reaction is (2R)-2-phosphoglycerate = (2R)-3-phosphoglycerate. The protein operates within carbohydrate degradation; glycolysis; pyruvate from D-glyceraldehyde 3-phosphate: step 3/5. The chain is Probable phosphoglycerate mutase GpmB from Salmonella agona (strain SL483).